A 204-amino-acid chain; its full sequence is Ribonuclease HII (204 aa).

An RNase H type-2 domain is found at 8–197 (RLICGVDEAG…VRELLQNPPL (190 aa)). 3 residues coordinate a divalent metal cation: Asp14, Glu15, and Asp106.

Belongs to the RNase HII family. It depends on Mn(2+) as a cofactor. Mg(2+) serves as cofactor.

It is found in the cytoplasm. It catalyses the reaction Endonucleolytic cleavage to 5'-phosphomonoester.. Its function is as follows. Endonuclease that specifically degrades the RNA of RNA-DNA hybrids. This Azoarcus sp. (strain BH72) protein is Ribonuclease HII.